The primary structure comprises 96 residues: Iron-sulfur cluster assembly protein CyaY (96 aa).

The protein belongs to the frataxin family.

Involved in iron-sulfur (Fe-S) cluster assembly. May act as a regulator of Fe-S biogenesis. This Rickettsia bellii (strain RML369-C) protein is Iron-sulfur cluster assembly protein CyaY.